The following is a 1040-amino-acid chain: Vitamin B12-dependent ribonucleotide reductase (1040 aa).

Substrate-binding positions include S169, 213–214 (AC), G242, 420–424 (NPCSE), and 604–608 (PTGTI). C214 and C433 are joined by a disulfide. N420 functions as the Proton acceptor in the catalytic mechanism. C422 functions as the Cysteine radical intermediate in the catalytic mechanism. The active-site Proton acceptor is the E424. Disordered stretches follow at residues 909–932 (SAEGAAKTGGNGPDLTTAPAGATA) and 969–988 (GSATNGHSNGQSAGGSSDGA). Polar residues predominate over residues 969–979 (GSATNGHSNGQ).

Belongs to the ribonucleoside diphosphate reductase class-2 family. The cofactor is adenosylcob(III)alamin.

The enzyme catalyses a 2'-deoxyribonucleoside 5'-diphosphate + [thioredoxin]-disulfide + H2O = a ribonucleoside 5'-diphosphate + [thioredoxin]-dithiol. In terms of biological role, catalyzes the reduction of ribonucleotides to deoxyribonucleotides. May function to provide a pool of deoxyribonucleotide precursors for DNA repair during oxygen limitation and/or for immediate growth after restoration of oxygen. The polypeptide is Vitamin B12-dependent ribonucleotide reductase (nrdJ) (Rhodopirellula baltica (strain DSM 10527 / NCIMB 13988 / SH1)).